Consider the following 240-residue polypeptide: Thiopurine S-methyltransferase (240 aa).

Residue 24-35 (WQDKWVTRHIAF) participates in S-adenosyl-L-methionine binding. Position 35 (F35) interacts with substrate. At K53 the chain carries N6-acetyllysine. S-adenosyl-L-methionine is bound by residues L64, E85, 129-130 (SI), and R147.

Belongs to the class I-like SAM-binding methyltransferase superfamily. TPMT family. As to quaternary structure, monomer.

It is found in the cytoplasm. The enzyme catalyses S-adenosyl-L-methionine + a thiopurine = S-adenosyl-L-homocysteine + a thiopurine S-methylether.. The catalysed reaction is mercaptopurine + S-adenosyl-L-methionine = 6-methylthiopurine + S-adenosyl-L-homocysteine + H(+). Functionally, catalyzes the S-methylation of thiopurine drugs such as 6-mercaptopurine (also called mercaptopurine, 6-MP or its brand name Purinethol) using S-adenosyl-L-methionine as the methyl donor. TPMT activity modulates the cytotoxic effects of thiopurine prodrugs. A natural substrate for this enzyme has yet to be identified. The protein is Thiopurine S-methyltransferase (Tpmt) of Rattus norvegicus (Rat).